Reading from the N-terminus, the 763-residue chain is Xaa-Pro dipeptidyl-peptidase (763 aa).

Active-site charge relay system residues include Ser349, Asp469, and His499.

This sequence belongs to the peptidase S15 family. In terms of assembly, homodimer.

Its subcellular location is the cytoplasm. It carries out the reaction Hydrolyzes Xaa-Pro-|- bonds to release unblocked, N-terminal dipeptides from substrates including Ala-Pro-|-p-nitroanilide and (sequentially) Tyr-Pro-|-Phe-Pro-|-Gly-Pro-|-Ile.. Functionally, removes N-terminal dipeptides sequentially from polypeptides having unsubstituted N-termini provided that the penultimate residue is proline. This is Xaa-Pro dipeptidyl-peptidase from Streptococcus macedonicus (Streptococcus gallolyticus macedonicus).